Reading from the N-terminus, the 409-residue chain is 1-deoxy-D-xylulose 5-phosphate reductoisomerase (409 aa).

NADPH contacts are provided by Thr5, Gly6, Ser7, Ile8, Gly31, Asn33, and Asn122. Lys123 contributes to the 1-deoxy-D-xylulose 5-phosphate binding site. Residue Glu124 coordinates NADPH. Asp148 is a binding site for Mn(2+). 4 residues coordinate 1-deoxy-D-xylulose 5-phosphate: Ser149, Glu150, Ser186, and His209. Glu150 is a binding site for Mn(2+). An NADPH-binding site is contributed by Gly215. Ser222, Asn227, Lys228, and Glu231 together coordinate 1-deoxy-D-xylulose 5-phosphate. Glu231 is a binding site for Mn(2+).

Belongs to the DXR family. The cofactor is Mg(2+). Mn(2+) serves as cofactor.

It carries out the reaction 2-C-methyl-D-erythritol 4-phosphate + NADP(+) = 1-deoxy-D-xylulose 5-phosphate + NADPH + H(+). It functions in the pathway isoprenoid biosynthesis; isopentenyl diphosphate biosynthesis via DXP pathway; isopentenyl diphosphate from 1-deoxy-D-xylulose 5-phosphate: step 1/6. In terms of biological role, catalyzes the NADPH-dependent rearrangement and reduction of 1-deoxy-D-xylulose-5-phosphate (DXP) to 2-C-methyl-D-erythritol 4-phosphate (MEP). The protein is 1-deoxy-D-xylulose 5-phosphate reductoisomerase of Parasynechococcus marenigrum (strain WH8102).